The primary structure comprises 1012 residues: MDALDASKLLDEELYSRQLYVLGSPAMQRIQGARVLVSGLQGLGAEVAKNLVLMGVGSLTLHDPHPTCWSDLAAQFLLSEQDLERSRAEASQELLAQLNRAVQVVVHTGDITEDLLLDFQVVVLTAAKLEEQLKVGTLCHKHGVCFLAADTRGLVGQLFCDFGEDFTVQDPTEAEPLTAAIQHISQGSPGILTLRKGANTHYFRDGDLVTFSGIEGMVELNDCDPRSIHVREDGSLEIGDTTTFSRYLRGGAITEVKRPKTVRHKSLDTALLQPHVVAQSSQEVHHAHCLHQAFCALHKFQHLHGRPPQPWDPVDAETVVGLARDLEPLKRTEEEPLEEPLDEALVRTVALSSAGVLSPMVAMLGAVAAQEVLKAISRKFMPLDQWLYFDALDCLPEDGELLPSPEDCALRGSRYDGQIAVFGAGFQEKLRRQHYLLVGAGAIGCELLKVFALVGLGAGNSGGLTVVDMDHIERSNLSRQFLFRSQDVGRPKAEVAAAAARGLNPDLQVIPLTYPLDPTTEHIYGDNFFSRVDGVAAALDSFQARRYVAARCTHYLKPLLEAGTSGTWGSATVFMPHVTEAYRAPASAAASEDAPYPVCTVRYFPSTAEHTLQWARHEFEELFRLSAETINHHQQAHTSLADMDEPQTLTLLKPVLGVLRVRPQNWQDCVAWALGHWKLCFHYGIKQLLRHFPPNKVLEDGTPFWSGPKQCPQPLEFDTNQDTHLLYVLAAANLYAQMHGLPGSQDWTALRELLKLLPQPDPQQMAPIFASNLELASASAEFGPEQQKELNKALEVWSVGPPLKPLMFEKDDDSNFHVDFVVAAASLRCQNYGIPPVNRAQSKRIVGQIIPAIATTTAAVAGLLGLELYKVVSGPRPRSAFRHSYLHLAENYLIRYMPFAPAIQTFHHLKWTSWDRLKVPAGQPERTLESLLAHLQEQHGLRVRILLHGSALLYAAGWSPEKQAQHLPLRVTELVQQLTGQAPAPGQRVLVLELSCEGDDEDTAFPPLHYEL.

Residues 23–159 (GSPAMQRIQG…DTRGLVGQLF (137 aa)) form a 1-1 repeat. The interval 23 to 575 (GSPAMQRIQG…GTWGSATVFM (553 aa)) is 2 approximate repeats. Ser-266 carries the phosphoserine modification. Residues 423–575 (GAGFQEKLRR…GTWGSATVFM (153 aa)) form a 1-2 repeat. An ATP-binding site is contributed by 442–471 (AIGCELLKVFALVGLGAGNSGGLTVVDMDH). Cys-599 functions as the Glycyl thioester intermediate in the catalytic mechanism.

It belongs to the ubiquitin-activating E1 family. (Microbial infection) Interacts with human cytomegalovirus proteins NEC2/UL50 and UL26; these interactions inhibit ISGylation and cause proteasomal degradation of UBA7. As to quaternary structure, (Microbial infection) Interacts with rotavirus non-structural protein 5 (NSP5); this interaction promotes UBA7 proteasomal degradation. In terms of assembly, monomer. Binds and is involved in the conjugation of G1P2/ISG15. In terms of processing, ISGylated. Post-translationally, ubiquitinated by RNF170. Expressed in a variety of normal and tumor cell types, but is reduced in lung cancer cell lines.

Its subcellular location is the cytoplasm. The protein localises to the nucleus. It participates in protein modification; protein ubiquitination. Its function is as follows. E1-activating enzyme that catalyzes the covalent conjugation of the ubiquitin-like protein product of ISG15 to additional interferon stimulated proteins (ISGs) as well as other cellular proteins such as P53 in a process termed protein ISGylation. Plays an essential role in antiviral immunity together with ISG15 by restricting the replication of many viruses including rabies virus, influenza virus, sindbis virus, rotavirus or human cytomegalovirus. For example, ISG15 modification of influenza A protein NS1 disrupts the association of the NS1 with importin-alpha leading to NS1 nuclear import inhibition. ISGylation of human cytomegalovirs protein UL26 regulates its stability and inhibits its activities to suppress NF-kappa-B signaling. The chain is Ubiquitin-like modifier-activating enzyme 7 from Homo sapiens (Human).